The primary structure comprises 428 residues: 3-phosphoshikimate 1-carboxyvinyltransferase (428 aa).

3-phosphoshikimate-binding residues include K19, S20, and R24. Residue K19 coordinates phosphoenolpyruvate. Phosphoenolpyruvate contacts are provided by G91 and R119. 3-phosphoshikimate is bound by residues S164, Q166, D312, and K339. Q166 contributes to the phosphoenolpyruvate binding site. Residue D312 is the Proton acceptor of the active site. 2 residues coordinate phosphoenolpyruvate: R343 and R386.

This sequence belongs to the EPSP synthase family. As to quaternary structure, monomer.

It localises to the cytoplasm. It catalyses the reaction 3-phosphoshikimate + phosphoenolpyruvate = 5-O-(1-carboxyvinyl)-3-phosphoshikimate + phosphate. It functions in the pathway metabolic intermediate biosynthesis; chorismate biosynthesis; chorismate from D-erythrose 4-phosphate and phosphoenolpyruvate: step 6/7. Its function is as follows. Catalyzes the transfer of the enolpyruvyl moiety of phosphoenolpyruvate (PEP) to the 5-hydroxyl of shikimate-3-phosphate (S3P) to produce enolpyruvyl shikimate-3-phosphate and inorganic phosphate. This Bacillus licheniformis (strain ATCC 14580 / DSM 13 / JCM 2505 / CCUG 7422 / NBRC 12200 / NCIMB 9375 / NCTC 10341 / NRRL NRS-1264 / Gibson 46) protein is 3-phosphoshikimate 1-carboxyvinyltransferase.